A 309-amino-acid polypeptide reads, in one-letter code: Intron-encoded DNA endonuclease ai2a (309 aa).

This sequence belongs to the LAGLIDADG endonuclease family.

The protein resides in the mitochondrion. In terms of biological role, mitochondrial DNA endonuclease involved in intron homing. Cleaves only one strand of intronless DNA sequence at the site which coincides with the I-SceII cleavage recognition site. The protein is Intron-encoded DNA endonuclease ai2a (ai2a) of Dictyostelium discoideum (Social amoeba).